The following is a 263-amino-acid chain: Hydroxyethylthiazole kinase (263 aa).

M41 serves as a coordination point for substrate. The ATP site is built by R117 and S163. Residue G190 participates in substrate binding.

It belongs to the Thz kinase family. Requires Mg(2+) as cofactor.

It catalyses the reaction 5-(2-hydroxyethyl)-4-methylthiazole + ATP = 4-methyl-5-(2-phosphooxyethyl)-thiazole + ADP + H(+). Its pathway is cofactor biosynthesis; thiamine diphosphate biosynthesis; 4-methyl-5-(2-phosphoethyl)-thiazole from 5-(2-hydroxyethyl)-4-methylthiazole: step 1/1. Its function is as follows. Catalyzes the phosphorylation of the hydroxyl group of 4-methyl-5-beta-hydroxyethylthiazole (THZ). This chain is Hydroxyethylthiazole kinase, found in Lactiplantibacillus plantarum (strain ATCC BAA-793 / NCIMB 8826 / WCFS1) (Lactobacillus plantarum).